The chain runs to 548 residues: Alpha-humulene synthase (548 aa).

Mg(2+) is bound by residues Asp302, Asp306, and Glu453. Positions 302 to 306 match the DDXXD motif motif; that stretch reads DDIYD.

The protein belongs to the terpene synthase family. In terms of tissue distribution, mostly expressed in rhizomes.

The enzyme catalyses (2E,6E)-farnesyl diphosphate = alpha-humulene + diphosphate. Catalyzes the formation of alpha-humulene in the first step of zerumbone biosynthesis, a highly promising multi-anticancer agent. Also mediates formation of beta-caryophyllene at a much lower level. This Zingiber zerumbet (Shampoo ginger) protein is Alpha-humulene synthase (ZSS1).